We begin with the raw amino-acid sequence, 425 residues long: Pre-mRNA-splicing factor PRP46 (425 aa).

WD repeat units follow at residues 111–151 (GHTG…LKVT), 154–193 (GHIMTVRDICISARHPYMFSASQDKLVKCWDLERNTVVRD), 196–235 (GTLSGVHSVDLHPSLDLIVSAGRDSVVRVWDIRSRSCVLT), 238–279 (GHRG…KTLT), 281–320 (HKRNVRDLAFNPTEFSFASACTDDIRSWKLVDGQLLTNFN), 322–360 (EALGIVNTLACNQDGVLFAGGDTGELSFFDYKTGHKFQK), and 371–410 (ESEKGVLASTFDRTGLRLLTCERDKSIKIWKHIDGATQDS).

This sequence belongs to the WD repeat PRL1/PRL2 family. In terms of assembly, associated with the spliceosome.

It is found in the cytoplasm. It localises to the nucleus. Functionally, involved in pre-mRNA splicing and required for cell cycle progression at G2/M. This is Pre-mRNA-splicing factor PRP46 (PRP46) from Eremothecium gossypii (strain ATCC 10895 / CBS 109.51 / FGSC 9923 / NRRL Y-1056) (Yeast).